The primary structure comprises 178 residues: Cell division protein ZapC (178 aa).

This sequence belongs to the ZapC family. As to quaternary structure, interacts directly with FtsZ.

The protein resides in the cytoplasm. Functionally, contributes to the efficiency of the cell division process by stabilizing the polymeric form of the cell division protein FtsZ. Acts by promoting interactions between FtsZ protofilaments and suppressing the GTPase activity of FtsZ. This is Cell division protein ZapC from Aeromonas hydrophila subsp. hydrophila (strain ATCC 7966 / DSM 30187 / BCRC 13018 / CCUG 14551 / JCM 1027 / KCTC 2358 / NCIMB 9240 / NCTC 8049).